The primary structure comprises 97 residues: Large ribosomal subunit protein uL23 (97 aa).

This sequence belongs to the universal ribosomal protein uL23 family. In terms of assembly, part of the 50S ribosomal subunit. Contacts protein L29, and trigger factor when it is bound to the ribosome.

Functionally, one of the early assembly proteins it binds 23S rRNA. One of the proteins that surrounds the polypeptide exit tunnel on the outside of the ribosome. Forms the main docking site for trigger factor binding to the ribosome. The chain is Large ribosomal subunit protein uL23 from Brucella abortus (strain S19).